Consider the following 272-residue polypeptide: Biglycan (272 aa).

Positions 1–16 (MWPLWLLASLLALSQA) are cleaved as a signal peptide. Residues 17-37 (LPFEQKAFWDFTLDDGLPMLN) constitute a propeptide that is removed on maturation. 2 O-linked (Xyl...) (glycosaminoglycan) serine glycosylation sites follow: S42 and S48. Residues 55-91 (ALPPTFSAMCPFGCHCHLRVVQCSDLGLKAVPKEISP) form the LRRNT domain. 2 disulfide bridges follow: C64–C70 and C68–C77. LRR repeat units lie at residues 92–113 (DTTL…DFKG), 116–137 (HLYA…PSAP), 138–161 (DGLK…DLPE), 162–183 (TLNE…DLLR), 186–209 (KLYR…SFLP), 210–232 (TLRE…PDLK), 233–254 (LLQV…DFCP), and 255–272 (VGFG…LFNN).

This sequence belongs to the small leucine-rich proteoglycan (SLRP) family. SLRP class I subfamily. In terms of assembly, homodimer. Forms a ternary complex with MFAP2 and ELN. In terms of processing, the two attached glycosaminoglycan chains can be either chondroitin sulfate or dermatan sulfate. As to expression, found in several connective tissues, especially in articular cartilages.

It localises to the secreted. The protein localises to the extracellular space. Its subcellular location is the extracellular matrix. May be involved in collagen fiber assembly. The sequence is that of Biglycan (BGN) from Sus scrofa (Pig).